A 430-amino-acid chain; its full sequence is tRNA(Ile)-lysidine synthase (430 aa).

An ATP-binding site is contributed by S21–S26.

The protein belongs to the tRNA(Ile)-lysidine synthase family.

It localises to the cytoplasm. The enzyme catalyses cytidine(34) in tRNA(Ile2) + L-lysine + ATP = lysidine(34) in tRNA(Ile2) + AMP + diphosphate + H(+). Its function is as follows. Ligates lysine onto the cytidine present at position 34 of the AUA codon-specific tRNA(Ile) that contains the anticodon CAU, in an ATP-dependent manner. Cytidine is converted to lysidine, thus changing the amino acid specificity of the tRNA from methionine to isoleucine. The chain is tRNA(Ile)-lysidine synthase from Salmonella typhimurium (strain LT2 / SGSC1412 / ATCC 700720).